The sequence spans 198 residues: Probable GTP-binding protein EngB (198 aa).

The 174-residue stretch at 22–195 (DLPEIALAGR…WKAIHKMTKT (174 aa)) folds into the EngB-type G domain. Residues 30-37 (GRSNVGKS), 57-61 (GKTQT), 75-78 (DVPG), 142-145 (TKAD), and 174-176 (FSS) each bind GTP. Positions 37 and 59 each coordinate Mg(2+).

It belongs to the TRAFAC class TrmE-Era-EngA-EngB-Septin-like GTPase superfamily. EngB GTPase family. Mg(2+) serves as cofactor.

Its function is as follows. Necessary for normal cell division and for the maintenance of normal septation. The polypeptide is Probable GTP-binding protein EngB (Bacillus mycoides (strain KBAB4) (Bacillus weihenstephanensis)).